A 580-amino-acid chain; its full sequence is MSATAFPTLSTPAGEIPATAPAWNRQRRSQMPSHRYRDVHSRVAVPLTDRQWPTRRLTEAPLWVPVDLRDGNQALAEPMDPARKRRFFELLVAMGYKEIEVGYPSASQTDFDFVRLLADTDLAPDDVTVVVFTPARRDLIERTVESIRGITNPVVVHMYTATAPTWREVVLGHDRAALRALILDGGREVLRCAGDLPTVRFEFSPEVFNLTEPDFVLEICDAMTELWQATPQRPVILNLPATVEVATPNVYADQIEYMHRNLARRDSVILSVHPHNDRGTGIACAELAVLAGAQRVEGCVFGNGERTGNVDIATLALNLHAQGVDPMIDFSDIDEIRRTVEYCNRVEIHARHPYVGDLVHTAFSGTHQDAIKKGLAEHRARAAARGVPEREIDWRVPYLPIDPADIGRSYDAVIRVNSQSGKGGIAYLLESEYGTVLPRRLQIDFARHVQQHTDDTGREVTAAELWSLFSAVYLREGEADAPQADLGNRLGIDGVVASGASAAELGAALRRHGVELEVLAVHHTTVTGELLALVEYRDGAGVRWSAGRGRTAGEAVGNAVAAAVGPATAPARAVAEVRPG.

Positions 1 to 11 are enriched in polar residues; that stretch reads MSATAFPTLST. The tract at residues 1 to 37 is disordered; the sequence is MSATAFPTLSTPAGEIPATAPAWNRQRRSQMPSHRYR. Residues 61–334 enclose the Pyruvate carboxyltransferase domain; that stretch reads PLWVPVDLRD…DPMIDFSDID (274 aa). Residues aspartate 70, histidine 273, histidine 275, and asparagine 309 each coordinate Mg(2+). The interval 476-580 is regulatory domain; it reads EGEADAPQAD…ARAVAEVRPG (105 aa).

The protein belongs to the alpha-IPM synthase/homocitrate synthase family. LeuA type 2 subfamily. As to quaternary structure, homodimer. Requires Mg(2+) as cofactor.

It is found in the cytoplasm. The enzyme catalyses 3-methyl-2-oxobutanoate + acetyl-CoA + H2O = (2S)-2-isopropylmalate + CoA + H(+). Its pathway is amino-acid biosynthesis; L-leucine biosynthesis; L-leucine from 3-methyl-2-oxobutanoate: step 1/4. Functionally, catalyzes the condensation of the acetyl group of acetyl-CoA with 3-methyl-2-oxobutanoate (2-ketoisovalerate) to form 3-carboxy-3-hydroxy-4-methylpentanoate (2-isopropylmalate). This chain is 2-isopropylmalate synthase, found in Nocardia farcinica (strain IFM 10152).